The primary structure comprises 158 residues: NADH-quinone oxidoreductase subunit B (158 aa).

C37, C38, C102, and C132 together coordinate [4Fe-4S] cluster.

Belongs to the complex I 20 kDa subunit family. In terms of assembly, NDH-1 is composed of 14 different subunits. Subunits NuoB, C, D, E, F, and G constitute the peripheral sector of the complex. It depends on [4Fe-4S] cluster as a cofactor.

It localises to the cell inner membrane. It carries out the reaction a quinone + NADH + 5 H(+)(in) = a quinol + NAD(+) + 4 H(+)(out). In terms of biological role, NDH-1 shuttles electrons from NADH, via FMN and iron-sulfur (Fe-S) centers, to quinones in the respiratory chain. Couples the redox reaction to proton translocation (for every two electrons transferred, four hydrogen ions are translocated across the cytoplasmic membrane), and thus conserves the redox energy in a proton gradient. The sequence is that of NADH-quinone oxidoreductase subunit B from Dechloromonas aromatica (strain RCB).